An 89-amino-acid polypeptide reads, in one-letter code: Large ribosomal subunit protein bL27 (89 aa).

This sequence belongs to the bacterial ribosomal protein bL27 family.

The polypeptide is Large ribosomal subunit protein bL27 (Afipia carboxidovorans (strain ATCC 49405 / DSM 1227 / KCTC 32145 / OM5) (Oligotropha carboxidovorans)).